A 599-amino-acid chain; its full sequence is NADH-ubiquinone oxidoreductase chain 5 (599 aa).

A run of 17 helical transmembrane segments spans residues 1 to 21 (MALM…PLVF), 41 to 61 (FITS…IIIL), 79 to 99 (LDLY…SIME), 114 to 134 (FLNY…ANNM), 137 to 157 (LFIG…WWYG), 166 to 186 (LQAI…MAWF), 198 to 218 (IFSL…AAMG), 237 to 257 (TPVS…FLLI), 269 to 289 (IMTT…ICAL), 297 to 317 (IIAF…GINQ), 323 to 343 (LHIC…GSII), 362 to 382 (MPLT…TPFM), 400 to 420 (INSW…AYST), 453 to 473 (LMLG…PVNM), 478 to 498 (MPFT…IVAM), 509 to 529 (MYPN…PTII), and 578 to 598 (GMLK…MLIM).

Belongs to the complex I subunit 5 family.

The protein localises to the mitochondrion inner membrane. The enzyme catalyses a ubiquinone + NADH + 5 H(+)(in) = a ubiquinol + NAD(+) + 4 H(+)(out). Core subunit of the mitochondrial membrane respiratory chain NADH dehydrogenase (Complex I) that is believed to belong to the minimal assembly required for catalysis. Complex I functions in the transfer of electrons from NADH to the respiratory chain. The immediate electron acceptor for the enzyme is believed to be ubiquinone. This Geomys personatus (Texas pocket gopher) protein is NADH-ubiquinone oxidoreductase chain 5 (ND5).